A 234-amino-acid chain; its full sequence is Exotoxin type G (234 aa).

The N-terminal stretch at 1–24 (MKTNILTIIILSCVFSYGSQLAYA) is a signal peptide.

It belongs to the staphylococcal/streptococcal toxin family.

Mitogenic for human peripheral blood lymphocytes. In Streptococcus pyogenes serotype M1, this protein is Exotoxin type G (speG).